The chain runs to 178 residues: UPF0302 protein Bcer98_1244 (178 aa).

It belongs to the UPF0302 family.

This is UPF0302 protein Bcer98_1244 from Bacillus cytotoxicus (strain DSM 22905 / CIP 110041 / 391-98 / NVH 391-98).